The chain runs to 131 residues: Ribosomally synthesized cyclic peptide phomopsin precursor gigA (131 aa).

The N-terminal stretch at 1-18 is a signal peptide; it reads MQFTLIFFYATLAAFGLA. 5 consecutive propeptides follow at residues 19-38, 48-65, 75-92, 102-119, and 129-131; these read APSE…LDKR, ADLV…LDKR, ADMV…LDKR, ADMV…LAKR, and ADM.

Post-translationally, gigA is processed by several endopeptidases including kexin proteases to produce 2 identical copies of the nonaxapeptide Ile-Asn-Phe-Lys-Ile-Pro-Tyr-Thr-Gly, one copy of the nonaketide Ile-Gly-Phe-Lys-Leu-Pro-Tyr-Arg-Gly and one copy of the nonaketide Pro-Asn-Phe-Lys-Met-Pro-Tyr-Arg-Gly, that are further modified into phomapsins B, C and A, respectively. After being excised from the precursor peptide, the core peptides are cyclized and modified post-translationally by enzymes encoded within the gene cluster. Epichloecyclin biosynthesis requires only dimethylation of the side-chain amino group of the conserved lysine for completion.

It participates in mycotoxin biosynthesis. Ribosomally synthesized cyclic peptide phomopsin precursor; part of the gene cluster that mediates the biosynthesis of the epichloecyclins, a group of nonapeptides, with a likely cyclic structure and dimethylation of the conserved lysine. The gigA translated product contains 4 repeated peptide embedding the nonapeptide Ile-Asn-Phe-Lys-Ile-Pro-Tyr-Thr-Gly in repeats 1 and 2, Ile-Gly-Phe-Lys-Leu-Pro-Tyr-Arg-Gly in repeat 3, and Pro-Asn-Phe-Lys-Met-Pro-Tyr-Arg-Gly in repeat 4 that are converted into epichloecyclins B, C and A, respectively. Moreover, removal of the last Gly residue in epichloecyclins B and C leads to epichloecyclins D and E, respectively. This Epichloe festucae (strain Fl1) protein is Ribosomally synthesized cyclic peptide phomopsin precursor gigA (nc25).